The following is a 1271-amino-acid chain: ATP-dependent helicase/nuclease subunit A (1271 aa).

In terms of domain architecture, UvrD-like helicase ATP-binding spans 3–476 (TKWTEEQELA…IMLYKNFRSR (474 aa)). Position 24–31 (24–31 (AAAGSGKT)) interacts with ATP. The UvrD-like helicase C-terminal domain maps to 528 to 824 (IENLKVAGDI…RIMSIHKSKG (297 aa)).

The protein belongs to the helicase family. AddA subfamily. As to quaternary structure, heterodimer of AddA and AddB/RexB. It depends on Mg(2+) as a cofactor.

The catalysed reaction is Couples ATP hydrolysis with the unwinding of duplex DNA by translocating in the 3'-5' direction.. The enzyme catalyses ATP + H2O = ADP + phosphate + H(+). In terms of biological role, the heterodimer acts as both an ATP-dependent DNA helicase and an ATP-dependent, dual-direction single-stranded exonuclease. Recognizes the chi site generating a DNA molecule suitable for the initiation of homologous recombination. The AddA nuclease domain is required for chi fragment generation; this subunit has the helicase and 3' -&gt; 5' nuclease activities. The sequence is that of ATP-dependent helicase/nuclease subunit A from Clostridium perfringens (strain ATCC 13124 / DSM 756 / JCM 1290 / NCIMB 6125 / NCTC 8237 / Type A).